The chain runs to 364 residues: tRNA 2-selenouridine synthase (364 aa).

Positions 14–136 constitute a Rhodanese domain; that stretch reads VLNNTPLIDV…AFRNWLMQET (123 aa). Cysteine 97 acts as the S-selanylcysteine intermediate in catalysis.

This sequence belongs to the SelU family. In terms of assembly, monomer.

The enzyme catalyses 5-methylaminomethyl-2-thiouridine(34) in tRNA + selenophosphate + (2E)-geranyl diphosphate + H2O + H(+) = 5-methylaminomethyl-2-selenouridine(34) in tRNA + (2E)-thiogeraniol + phosphate + diphosphate. It catalyses the reaction 5-methylaminomethyl-2-thiouridine(34) in tRNA + (2E)-geranyl diphosphate = 5-methylaminomethyl-S-(2E)-geranyl-thiouridine(34) in tRNA + diphosphate. The catalysed reaction is 5-methylaminomethyl-S-(2E)-geranyl-thiouridine(34) in tRNA + selenophosphate + H(+) = 5-methylaminomethyl-2-(Se-phospho)selenouridine(34) in tRNA + (2E)-thiogeraniol. It carries out the reaction 5-methylaminomethyl-2-(Se-phospho)selenouridine(34) in tRNA + H2O = 5-methylaminomethyl-2-selenouridine(34) in tRNA + phosphate. In terms of biological role, involved in the post-transcriptional modification of the uridine at the wobble position (U34) of tRNA(Lys), tRNA(Glu) and tRNA(Gln). Catalyzes the conversion of 2-thiouridine (S2U-RNA) to 2-selenouridine (Se2U-RNA). Acts in a two-step process involving geranylation of 2-thiouridine (S2U) to S-geranyl-2-thiouridine (geS2U) and subsequent selenation of the latter derivative to 2-selenouridine (Se2U) in the tRNA chain. The sequence is that of tRNA 2-selenouridine synthase from Sulfurovum sp. (strain NBC37-1).